Here is a 617-residue protein sequence, read N- to C-terminus: Protein fem-1 homolog C (617 aa).

At Met-1 the chain carries N-acetylmethionine. ANK repeat units follow at residues 2 to 31 (DLKT…KEEV), 40 to 70 (NGAT…SIEV), 82 to 111 (EGAP…SVNN), 115 to 144 (TNST…DLEV), 148 to 177 (HGHT…DVNR), 181 to 210 (KGNT…KMEK), and 213 to 242 (YGMT…TSKT). TPR repeat units lie at residues 245 to 279 (INAL…RYSD) and 338 to 371 (SYYI…QQNN). 2 ANK repeats span residues 481 to 523 (NNFS…DVNV) and 527 to 556 (DDNS…HFDA).

Belongs to the fem-1 family. As to quaternary structure, component of a CRL2 E3 ubiquitin-protein ligase complex, also named ECS (Elongin BC-CUL2/5-SOCS-box protein) complex, composed of CUL2, Elongin BC (ELOB and ELOC), RBX1 and substrate-specific adapter FEM1C.

It participates in protein modification; protein ubiquitination. In terms of biological role, substrate-recognition component of a Cul2-RING (CRL2) E3 ubiquitin-protein ligase complex of the DesCEND (destruction via C-end degrons) pathway, which recognizes a C-degron located at the extreme C terminus of target proteins, leading to their ubiquitination and degradation. The C-degron recognized by the DesCEND pathway is usually a motif of less than ten residues and can be present in full-length proteins, truncated proteins or proteolytically cleaved forms. The CRL2(FEM1C) complex specifically recognizes proteins with an arginine at the C-terminus: recognizes and binds proteins ending with -Lys/Arg-Xaa-Arg and -Lys/Arg-Xaa-Xaa-Arg C-degrons, such as SIL1 or OR51B2, leading to their ubiquitination and degradation. The CRL2(FEM1C) complex mediates ubiquitination and degradation of truncated MSRB1/SEPX1 selenoproteins produced by failed UGA/Sec decoding. This Bos taurus (Bovine) protein is Protein fem-1 homolog C.